A 1088-amino-acid polypeptide reads, in one-letter code: RNA-directed RNA polymerase (1088 aa).

A RdRp catalytic domain is found at 501-687 (LSYGDVTRFL…AKRYIAGGKI (187 aa)).

Belongs to the reoviridae RNA-directed RNA polymerase family. Interacts with VP3 (Potential). Interacts with VP2; this interaction activates VP1. Interacts with NSP5; this interaction is probably necessary for the formation of functional virus factories. Interacts with NSP2; this interaction is weak. Requires Mg(2+) as cofactor.

Its subcellular location is the virion. It catalyses the reaction RNA(n) + a ribonucleoside 5'-triphosphate = RNA(n+1) + diphosphate. Functionally, RNA-directed RNA polymerase that is involved in both transcription and genome replication. Together with VP3 capping enzyme, forms an enzyme complex positioned near the channels situated at each of the five-fold vertices of the core. Following infection, the outermost layer of the virus is lost, leaving a double-layered particle (DLP) made up of the core and VP6 shell. VP1 then catalyzes the transcription of fully conservative plus-strand genomic RNAs that are extruded through the DLP's channels into the cytoplasm where they function as mRNAs for translation of viral proteins. One copy of each of the viral (+)RNAs is also recruited during core assembly, together with newly synthesized polymerase complexes and VP2. The polymerase of these novo-formed particles catalyzes the synthesis of complementary minus-strands leading to dsRNA formation. To do so, the polymerase specifically recognizes and binds 4 bases 5'-UGUG-3' in the conserved 3'-sequence of plus-strand RNA templates. VP2 presumably activates the autoinhibited VP1-RNA complex to coordinate packaging and genome replication. Once dsRNA synthesis is complete, the polymerase switches to the transcriptional mode, thus providing secondary transcription. The protein is RNA-directed RNA polymerase of Sus scrofa (Pig).